The chain runs to 318 residues: Mechanosensory protein 3 (318 aa).

LIM zinc-binding domains lie at 27–86 and 87–152; these read NKCY…DYSA and HRCA…PMDD. The segment at residues 214–273 is a DNA-binding region (homeobox); it reads RRGPRTTIRQNQLDVLNEMFSNTPKPSKHARAKLALETGLSMRVIQVWFQNRRSKERRLK.

The protein resides in the nucleus. Its function is as follows. Specifies differentiation of the set of six touch receptor neurons. Binds cooperatively as a heterodimer with unc-86 to sites in the mec-3 gene promoter. The sequence is that of Mechanosensory protein 3 (mec-3) from Caenorhabditis briggsae.